The chain runs to 505 residues: Flagellin (505 aa).

The protein belongs to the bacterial flagellin family.

The protein resides in the secreted. Its subcellular location is the bacterial flagellum. Its function is as follows. Flagellin is the subunit protein which polymerizes to form the filaments of bacterial flagella. The sequence is that of Flagellin (fliC) from Salmonella rostock.